Here is a 557-residue protein sequence, read N- to C-terminus: MMNNPRHNIREVRAPRGDKLNARYWTTEAPLRMLMNNLDPDVAENPNELVVYGGIGRAARTWNDFDRIVASLKTLGEDETLLVQSGKPVGVFRTHADAPRVLIANSNLVPHWATWEKFNELDKKGLMMYGQMTAGSWIYIGTQGIVQGTYETFVEAGRQHYGGNLKGKWILTGGLGGMGGAQPLAAVMAGACCLAIECNPDSIDFRLRTRYVDEKAETLDEAMEMIERWTKAGEAKSVGLLGNAAEIVPEMFRRGIRPDMVTDQTSAHDPINGYLPKGWTMAEWREKRVSDPKAVEKAARASMRDHVEAMVAFWNAGVPTLDYGNNIRQVAKDEGFENAFAFPGFVPAYIRPLFCRGIGPFRWAALSGDPEDIYKTDAKVRELTPGNTHLHNWLDMARERISFQGLPARICWVGLGDRHRLGLAFNEMVAKGELKAPVVIGRDHLDSGSVASPNRETEAMKDGSDAVSDWPLLNALLNTASGATWVSLHHGGGVGMGFSQHAGMVIVADGTPDAARRLERVLWNDPATGVMRHADAGYDIAIDCAKEHQLNLPGILG.

NAD(+) is bound by residues 53-54 (GG), Gln-131, 177-179 (GMG), Glu-197, 243-244 (NA), 264-268 (QTSAH), 274-275 (YL), and Tyr-323. Residue Cys-411 is part of the active site. Gly-493 contributes to the NAD(+) binding site.

This sequence belongs to the urocanase family. The cofactor is NAD(+).

The protein resides in the cytoplasm. It carries out the reaction 4-imidazolone-5-propanoate = trans-urocanate + H2O. The protein operates within amino-acid degradation; L-histidine degradation into L-glutamate; N-formimidoyl-L-glutamate from L-histidine: step 2/3. Its function is as follows. Catalyzes the conversion of urocanate to 4-imidazolone-5-propionate. This Mesorhizobium japonicum (strain LMG 29417 / CECT 9101 / MAFF 303099) (Mesorhizobium loti (strain MAFF 303099)) protein is Urocanate hydratase.